The chain runs to 444 residues: Sprouty-related, EVH1 domain-containing protein 1 (444 aa).

S2 carries the N-acetylserine modification. A WH1 domain is found at 6–123 (ATSDNDNSYA…RGIRRAIEDI (118 aa)). Residues 123–151 (ISQGCPESKNEAEGADDLQANEEDSSSSL) are disordered. Over residues 135 to 147 (EGADDLQANEEDS) the composition is skewed to acidic residues. K224 is subject to N6-methyllysine. A KBD domain is found at 233-285 (SIRHVSFQDEDEIVRINPRDILIRRYADYRHPDMWKNDLERDDADSSIQFSKP). A phosphoserine mark is found at S238 and S308. Positions 333-444 (SRCVYCQERF…CCGGKHKAAG (112 aa)) are required for interaction with TESK1. One can recognise an SPR domain in the interval 334–442 (RCVYCQERFN…CGCCGGKHKA (109 aa)).

As to quaternary structure, homodimer and heterodimer. Able to interact with SPRED2 to form heterodimers. Interacts (via C-terminus) with TAOK1/MARKK (via C-terminus); the interaction does not affect TAOK1 kinase activity. Interacts (via C-terminus) with TESK1 (via C-terminus); the interaction inhibits TESK1 kinase activity. Interacts with CAV1. Interacts with RAS. Interacts with palmitoyltransferase ZDHHC17/HIP14; the interaction leads to palmitoylation of SPRED1. In terms of processing, palmitoylated by ZDHHC17/HIP14. Post-translationally, phosphorylated on tyrosine. Ubiquitinated. As to expression, weakly expressed in embryonic cell line HEK293.

The protein resides in the cell membrane. It localises to the membrane. The protein localises to the caveola. It is found in the nucleus. Tyrosine kinase substrate that inhibits growth-factor-mediated activation of MAP kinase. Negatively regulates hematopoiesis of bone marrow. Inhibits fibroblast growth factor (FGF)-induced retinal lens fiber differentiation, probably by inhibiting FGF-mediated phosphorylation of ERK1/2. Attenuates actin stress fiber formation via inhibition of TESK1-mediated phosphorylation of cofilin. Inhibits TGFB-induced epithelial-to-mesenchymal transition in lens epithelial cells. This is Sprouty-related, EVH1 domain-containing protein 1 (SPRED1) from Homo sapiens (Human).